A 242-amino-acid chain; its full sequence is tRNA (guanine-N(1)-)-methyltransferase (242 aa).

S-adenosyl-L-methionine contacts are provided by residues Gly-113 and 133–138 (IGDYVL).

This sequence belongs to the RNA methyltransferase TrmD family. In terms of assembly, homodimer.

The protein resides in the cytoplasm. It catalyses the reaction guanosine(37) in tRNA + S-adenosyl-L-methionine = N(1)-methylguanosine(37) in tRNA + S-adenosyl-L-homocysteine + H(+). Functionally, specifically methylates guanosine-37 in various tRNAs. This is tRNA (guanine-N(1)-)-methyltransferase from Shewanella sediminis (strain HAW-EB3).